Reading from the N-terminus, the 128-residue chain is Fluoride-specific ion channel FluC (128 aa).

Helical transmembrane passes span 5–25, 35–55, 67–87, and 96–116; these read IVAI…LSLA, LGTL…AVVF, LFVI…SVEV, and FGWA…LTAL. 2 residues coordinate Na(+): glycine 75 and threonine 78.

The protein belongs to the fluoride channel Fluc/FEX (TC 1.A.43) family.

It localises to the cell inner membrane. The catalysed reaction is fluoride(in) = fluoride(out). With respect to regulation, na(+) is not transported, but it plays an essential structural role and its presence is essential for fluoride channel function. Functionally, fluoride-specific ion channel. Important for reducing fluoride concentration in the cell, thus reducing its toxicity. This Burkholderia lata (strain ATCC 17760 / DSM 23089 / LMG 22485 / NCIMB 9086 / R18194 / 383) protein is Fluoride-specific ion channel FluC.